A 209-amino-acid chain; its full sequence is Uracil phosphoribosyltransferase (209 aa).

Residues arginine 79, arginine 104, and 131-139 (DPMLATGGS) contribute to the 5-phospho-alpha-D-ribose 1-diphosphate site. Uracil-binding positions include isoleucine 194 and 199-201 (GDA). Aspartate 200 is a binding site for 5-phospho-alpha-D-ribose 1-diphosphate.

Belongs to the UPRTase family. Mg(2+) serves as cofactor.

The catalysed reaction is UMP + diphosphate = 5-phospho-alpha-D-ribose 1-diphosphate + uracil. The protein operates within pyrimidine metabolism; UMP biosynthesis via salvage pathway; UMP from uracil: step 1/1. With respect to regulation, allosterically activated by GTP. Catalyzes the conversion of uracil and 5-phospho-alpha-D-ribose 1-diphosphate (PRPP) to UMP and diphosphate. This Shouchella clausii (strain KSM-K16) (Alkalihalobacillus clausii) protein is Uracil phosphoribosyltransferase.